The primary structure comprises 420 residues: Pre-mRNA-splicing factor RBM22 (420 aa).

The C3H1-type zinc-finger motif lies at 159–186; that stretch reads RNRPHICSFWVKGECKRGEECPYRHEKP. The RRM domain maps to 232 to 305; that stretch reads TTLYVGGLGD…RRLNVKWGRS (74 aa). Disordered regions lie at residues 303–343 and 372–420; these read GRSQ…AAEE and APPP…HSSP. The segment covering 309 to 318 has biased composition (basic and acidic residues); it reads RGKEKDKEGT.

Belongs to the SLT11 family. As to quaternary structure, component of the pre-catalytic and catalytic spliceosome complexes. Component of the postcatalytic spliceosome P complex.

It is found in the nucleus. It localises to the cytoplasm. Functionally, required for pre-mRNA splicing as component of the activated spliceosome. Involved in the first step of pre-mRNA splicing. Binds directly to the internal stem-loop (ISL) domain of the U6 snRNA and to the pre-mRNA intron near the 5' splice site during the activation and catalytic phases of the spliceosome cycle. The chain is Pre-mRNA-splicing factor RBM22 (RBM22) from Gallus gallus (Chicken).